Reading from the N-terminus, the 355-residue chain is Ubiquinone biosynthesis protein COQ4 homolog, mitochondrial (355 aa).

Residues H134, D135, H138, and E150 each contribute to the Zn(2+) site.

It belongs to the COQ4 family. As to quaternary structure, component of a multi-subunit COQ enzyme complex. Requires Zn(2+) as cofactor.

It is found in the mitochondrion inner membrane. It carries out the reaction a 4-hydroxy-3-methoxy-5-(all-trans-polyprenyl)benzoate + H(+) = a 2-methoxy-6-(all-trans-polyprenyl)phenol + CO2. It participates in cofactor biosynthesis; ubiquinone biosynthesis. In terms of biological role, lyase that catalyzes the C1-decarboxylation of 4-hydroxy-3-methoxy-5-(all-trans-polyprenyl)benzoic acid into 2-methoxy-6-(all-trans-polyprenyl)phenol during ubiquinone biosynthesis. The protein is Ubiquinone biosynthesis protein COQ4 homolog, mitochondrial of Plasmodium yoelii yoelii.